A 623-amino-acid polypeptide reads, in one-letter code: Putative ABC transporter ATP-binding protein MG014 (623 aa).

The region spanning 16 to 325 is the ABC transmembrane type-1 domain; sequence LILAPFFTFA…YIVLGFILTS (310 aa). The next 6 membrane-spanning stretches (helical) occupy residues 27 to 47, 81 to 101, 157 to 177, 181 to 201, 266 to 286, and 307 to 327; these read IVID…VFSI, VLAT…LISI, FLRL…FAVT, DMSI…GILN, NIPF…LLVF, and IFAF…TSLT. The ABC transporter domain maps to 365–611; sequence LEFRNISFGL…CSLYQKMKES (247 aa). Position 400 to 407 (400 to 407) interacts with ATP; sequence GPTGSGKS.

This sequence belongs to the ABC transporter superfamily.

It is found in the cell membrane. The chain is Putative ABC transporter ATP-binding protein MG014 from Mycoplasma genitalium (strain ATCC 33530 / DSM 19775 / NCTC 10195 / G37) (Mycoplasmoides genitalium).